The primary structure comprises 38 residues: Cytochrome b559 subunit beta (38 aa).

The helical transmembrane segment at 13–29 (WLAVHALAVPTVFFLGS) threads the bilayer. Residue His-17 coordinates heme.

The protein belongs to the PsbE/PsbF family. As to quaternary structure, heterodimer of an alpha subunit and a beta subunit. PSII is composed of 1 copy each of membrane proteins PsbA, PsbB, PsbC, PsbD, PsbE, PsbF, PsbH, PsbI, PsbJ, PsbK, PsbL, PsbM, PsbT, PsbX, PsbY, PsbZ, Psb30/Ycf12, at least 3 peripheral proteins of the oxygen-evolving complex and a large number of cofactors. It forms dimeric complexes. Heme b serves as cofactor.

The protein localises to the plastid. It is found in the chloroplast thylakoid membrane. In terms of biological role, this b-type cytochrome is tightly associated with the reaction center of photosystem II (PSII). PSII is a light-driven water:plastoquinone oxidoreductase that uses light energy to abstract electrons from H(2)O, generating O(2) and a proton gradient subsequently used for ATP formation. It consists of a core antenna complex that captures photons, and an electron transfer chain that converts photonic excitation into a charge separation. This is Cytochrome b559 subunit beta from Ostreococcus tauri.